The sequence spans 231 residues: Cytochrome c oxidase subunit 2 (231 aa).

At 1-14 (MAHPAQLGLQNATS) the chain is on the mitochondrial intermembrane side. A helical transmembrane segment spans residues 15-45 (PIMEELIAFHDHALMIIFLISSLVLYVISLM). Topologically, residues 46 to 59 (LTTKLTHTSTMNAQ) are mitochondrial matrix. Residues 60–87 (EIEMIWTILPAIILIMIALPSLRILYMT) traverse the membrane as a helical segment. Residues 88–231 (DEFNKPYLTL…WASYLYIVSL (144 aa)) are Mitochondrial intermembrane-facing. 6 residues coordinate Cu cation: His-161, Cys-196, Glu-198, Cys-200, His-204, and Met-207. Residue Glu-198 participates in Mg(2+) binding.

The protein belongs to the cytochrome c oxidase subunit 2 family. In terms of assembly, component of the cytochrome c oxidase (complex IV, CIV), a multisubunit enzyme composed of 14 subunits. The complex is composed of a catalytic core of 3 subunits MT-CO1, MT-CO2 and MT-CO3, encoded in the mitochondrial DNA, and 11 supernumerary subunits COX4I, COX5A, COX5B, COX6A, COX6B, COX6C, COX7A, COX7B, COX7C, COX8 and NDUFA4, which are encoded in the nuclear genome. The complex exists as a monomer or a dimer and forms supercomplexes (SCs) in the inner mitochondrial membrane with NADH-ubiquinone oxidoreductase (complex I, CI) and ubiquinol-cytochrome c oxidoreductase (cytochrome b-c1 complex, complex III, CIII), resulting in different assemblies (supercomplex SCI(1)III(2)IV(1) and megacomplex MCI(2)III(2)IV(2)). Found in a complex with TMEM177, COA6, COX18, COX20, SCO1 and SCO2. Interacts with TMEM177 in a COX20-dependent manner. Interacts with COX20. Interacts with COX16. Cu cation is required as a cofactor.

The protein resides in the mitochondrion inner membrane. It carries out the reaction 4 Fe(II)-[cytochrome c] + O2 + 8 H(+)(in) = 4 Fe(III)-[cytochrome c] + 2 H2O + 4 H(+)(out). Its function is as follows. Component of the cytochrome c oxidase, the last enzyme in the mitochondrial electron transport chain which drives oxidative phosphorylation. The respiratory chain contains 3 multisubunit complexes succinate dehydrogenase (complex II, CII), ubiquinol-cytochrome c oxidoreductase (cytochrome b-c1 complex, complex III, CIII) and cytochrome c oxidase (complex IV, CIV), that cooperate to transfer electrons derived from NADH and succinate to molecular oxygen, creating an electrochemical gradient over the inner membrane that drives transmembrane transport and the ATP synthase. Cytochrome c oxidase is the component of the respiratory chain that catalyzes the reduction of oxygen to water. Electrons originating from reduced cytochrome c in the intermembrane space (IMS) are transferred via the dinuclear copper A center (CU(A)) of subunit 2 and heme A of subunit 1 to the active site in subunit 1, a binuclear center (BNC) formed by heme A3 and copper B (CU(B)). The BNC reduces molecular oxygen to 2 water molecules using 4 electrons from cytochrome c in the IMS and 4 protons from the mitochondrial matrix. This chain is Cytochrome c oxidase subunit 2 (MT-CO2), found in Alouatta palliata (Mantled howler monkey).